The chain runs to 960 residues: Endosome/lysosome-associated apoptosis and autophagy regulator family member 2 (960 aa).

The tract at residues 1–26 (MLFLRPGPARGRGRGRPARAPHSGLS) is disordered. Residues 1 to 44 (MLFLRPGPARGRGRGRPARAPHSGLSPPWSPAWICCWALAGCQA) form the signal peptide. Residues 45-860 (AWAGAGDLPS…TCETVDFWLK (816 aa)) lie on the Extracellular side of the membrane. N-linked (GlcNAc...) asparagine glycosylation occurs at Asn-171. 3 disulfides stabilise this stretch: Cys-295-Cys-312, Cys-325-Cys-348, and Cys-328-Cys-360. N-linked (GlcNAc...) asparagine glycans are attached at residues Asn-407 and Asn-622. Residues 597–808 (PTCPYIRSMA…LWESVEACPL (212 aa)) form the MRH domain. Intrachain disulfides connect Cys-599–Cys-651, Cys-661–Cys-689, Cys-758–Cys-794, and Cys-770–Cys-806. A helical transmembrane segment spans residues 861-881 (VGAGVGAFTAVLLVALTCYFW). Topologically, residues 882 to 960 (KKNQKLEYKY…QLKSSRSPNI (79 aa)) are cytoplasmic. Position 949 is a phosphoserine (Ser-949).

The protein belongs to the ELAPOR family.

It localises to the cell membrane. Functionally, functions as a regulator of the BMP signaling pathway and may be involved in epidermal differentiation. In Bos taurus (Bovine), this protein is Endosome/lysosome-associated apoptosis and autophagy regulator family member 2.